The primary structure comprises 107 residues: UPF0145 protein YbjQ (107 aa).

Belongs to the UPF0145 family.

In Salmonella gallinarum (strain 287/91 / NCTC 13346), this protein is UPF0145 protein YbjQ.